The following is a 317-amino-acid chain: Olfactory receptor 2F1 (317 aa).

Over 1–24 (MGTDNQTWVSEFILLGLSSDWDTR) the chain is Extracellular. A glycan (N-linked (GlcNAc...) asparagine) is linked at asparagine 5. Residues 25 to 48 (VSLFVLFLVMYVVTVLGNCLIVLL) form a helical membrane-spanning segment. The Cytoplasmic portion of the chain corresponds to 49-57 (IRLDSRLHT). The helical transmembrane segment at 58 to 79 (PMYFFLTNLSLVDVSYATSVVP) threads the bilayer. At 80 to 100 (QLLAHFLAEHKAIPFQSCAAQ) the chain is on the extracellular side. Cysteine 97 and cysteine 189 are joined by a disulfide. Residues 101–120 (LFFSLALGGIEFVLLAVMAY) form a helical membrane-spanning segment. Topologically, residues 121–139 (DRYVAVCDALRYSAIMHGG) are cytoplasmic. A helical membrane pass occupies residues 140–160 (LCARLAITSWVSGFISSPVQT). The Extracellular portion of the chain corresponds to 161-200 (AITFQLPMCRNKFIDHISCELLAVVRLACVDTSSNEVTIM). Residues 201–222 (VSSIVLLMTPFCLVLLSYIQII) form a helical membrane-spanning segment. The Cytoplasmic segment spans residues 223-236 (STILKIQSREGRKK). Residues 237-261 (AFHTCASHLTVVALCYGVAIFTYIQ) form a helical membrane-spanning segment. The Extracellular segment spans residues 262–272 (PHSSPSVLQEK). Residues 273–292 (LFSVFYAILTPMLNPMIYSL) traverse the membrane as a helical segment. Residues 293–317 (RNKEVKGAWQKLLWKFSGLTSKLAT) are Cytoplasmic-facing.

It belongs to the G-protein coupled receptor 1 family.

It is found in the cell membrane. In terms of biological role, odorant receptor. In Homo sapiens (Human), this protein is Olfactory receptor 2F1 (OR2F1).